The following is a 479-amino-acid chain: UDP-N-acetylmuramate--L-alanine ligase (479 aa).

128 to 134 is a binding site for ATP; that stretch reads GAHGKTT.

Belongs to the MurCDEF family.

It is found in the cytoplasm. It catalyses the reaction UDP-N-acetyl-alpha-D-muramate + L-alanine + ATP = UDP-N-acetyl-alpha-D-muramoyl-L-alanine + ADP + phosphate + H(+). Its pathway is cell wall biogenesis; peptidoglycan biosynthesis. Its function is as follows. Cell wall formation. The sequence is that of UDP-N-acetylmuramate--L-alanine ligase from Psychrobacter cryohalolentis (strain ATCC BAA-1226 / DSM 17306 / VKM B-2378 / K5).